A 453-amino-acid polypeptide reads, in one-letter code: Alpha-2B adrenergic receptor (453 aa).

At 1–17 (MSGPAMVHQEPYSVQAT) the chain is on the extracellular side. The chain crosses the membrane as a helical span at residues 18–42 (AAIASAITFLILFTIFGNALVILAV). Residues 43-54 (LTSRSLRAPQNL) lie on the Cytoplasmic side of the membrane. The helical transmembrane segment at 55 to 80 (FLVSLAAADILVATLIIPFSLANELL) threads the bilayer. The Extracellular portion of the chain corresponds to 81–90 (GYWYFWRAWC). A disulfide bridge links C90 with C169. The helical transmembrane segment at 91 to 113 (EVYLALDVLFCTSSIVHLCAISL) threads the bilayer. At 114 to 135 (DRYWAVSRALEYNSKRTPRRIK) the chain is on the cytoplasmic side. The chain crosses the membrane as a helical span at residues 136-158 (CIILTVWLIAAVISLPPLIYKGD). Residues 159–174 (QRPEPHGLPQCELNQE) are Extracellular-facing. A helical transmembrane segment spans residues 175–198 (AWYILASSIGSFFAPCLIMILVYL). Over 199-375 (RIYVIAKRSH…LSREKRFTFV (177 aa)) the chain is Cytoplasmic. Positions 214–329 (AKRGSGEGES…ASPASVFNPP (116 aa)) are disordered. Over residues 303 to 314 (AEEDEEEVEECE) the composition is skewed to acidic residues. Residues 376-399 (LAVVIGVFVVCWFPFFFSYSLGAI) form a helical membrane-spanning segment. The Extracellular portion of the chain corresponds to 400–408 (CPQHCKVPH). A helical transmembrane segment spans residues 409-432 (GLFQFFFWIGYCNSSLNPVIYTIF). Over 433–453 (NQDFRRAFRRILCRQWTQTGW) the chain is Cytoplasmic. A lipid anchor (S-palmitoyl cysteine) is attached at C445.

The protein belongs to the G-protein coupled receptor 1 family. Adrenergic receptor subfamily. ADRA2B sub-subfamily. In terms of assembly, interacts with RAB26. Interacts with PPP1R9B. Interacts with GGA1, GGA2 and GGA3.

It is found in the cell membrane. Alpha-2 adrenergic receptors mediate the catecholamine-induced inhibition of adenylate cyclase through the action of G proteins. The protein is Alpha-2B adrenergic receptor (Adra2b) of Mus musculus (Mouse).